Consider the following 176-residue polypeptide: Shikimate kinase (176 aa).

ATP is bound at residue 17 to 24; that stretch reads GMMGVGKS.

Belongs to the shikimate kinase family.

The protein resides in the cytoplasm. The enzyme catalyses shikimate + ATP = 3-phosphoshikimate + ADP + H(+). Its pathway is metabolic intermediate biosynthesis; chorismate biosynthesis; chorismate from D-erythrose 4-phosphate and phosphoenolpyruvate: step 5/7. This is Shikimate kinase from Zymomonas mobilis subsp. mobilis (strain ATCC 31821 / ZM4 / CP4).